Here is a 282-residue protein sequence, read N- to C-terminus: MEMO1 family protein Cmaq_1590 (282 aa).

Belongs to the MEMO1 family.

This chain is MEMO1 family protein Cmaq_1590, found in Caldivirga maquilingensis (strain ATCC 700844 / DSM 13496 / JCM 10307 / IC-167).